The following is a 264-amino-acid chain: 3-methyl-2-oxobutanoate hydroxymethyltransferase (264 aa).

Asp-45 and Asp-84 together coordinate Mg(2+). 3-methyl-2-oxobutanoate is bound by residues 45-46 (DS), Asp-84, and Lys-112. Position 114 (Glu-114) interacts with Mg(2+). Glu-181 acts as the Proton acceptor in catalysis.

Belongs to the PanB family. In terms of assembly, homodecamer; pentamer of dimers. Mg(2+) is required as a cofactor.

It localises to the cytoplasm. The enzyme catalyses 3-methyl-2-oxobutanoate + (6R)-5,10-methylene-5,6,7,8-tetrahydrofolate + H2O = 2-dehydropantoate + (6S)-5,6,7,8-tetrahydrofolate. It functions in the pathway cofactor biosynthesis; (R)-pantothenate biosynthesis; (R)-pantoate from 3-methyl-2-oxobutanoate: step 1/2. Functionally, catalyzes the reversible reaction in which hydroxymethyl group from 5,10-methylenetetrahydrofolate is transferred onto alpha-ketoisovalerate to form ketopantoate. In Shewanella sp. (strain MR-7), this protein is 3-methyl-2-oxobutanoate hydroxymethyltransferase.